Consider the following 246-residue polypeptide: tRNA (guanine-N(1)-)-methyltransferase (246 aa).

S-adenosyl-L-methionine is bound by residues G117 and 137-142 (IGDYVL).

The protein belongs to the RNA methyltransferase TrmD family. Homodimer.

It is found in the cytoplasm. The catalysed reaction is guanosine(37) in tRNA + S-adenosyl-L-methionine = N(1)-methylguanosine(37) in tRNA + S-adenosyl-L-homocysteine + H(+). Specifically methylates guanosine-37 in various tRNAs. The chain is tRNA (guanine-N(1)-)-methyltransferase from Acinetobacter baumannii (strain AB307-0294).